Reading from the N-terminus, the 526-residue chain is Bifunctional purine biosynthesis protein PurH (526 aa).

In terms of domain architecture, MGS-like spans 1–148 (MSLNNIIKNA…KNYKDVIVIV (148 aa)).

It belongs to the PurH family.

The enzyme catalyses (6R)-10-formyltetrahydrofolate + 5-amino-1-(5-phospho-beta-D-ribosyl)imidazole-4-carboxamide = 5-formamido-1-(5-phospho-D-ribosyl)imidazole-4-carboxamide + (6S)-5,6,7,8-tetrahydrofolate. It catalyses the reaction IMP + H2O = 5-formamido-1-(5-phospho-D-ribosyl)imidazole-4-carboxamide. It participates in purine metabolism; IMP biosynthesis via de novo pathway; 5-formamido-1-(5-phospho-D-ribosyl)imidazole-4-carboxamide from 5-amino-1-(5-phospho-D-ribosyl)imidazole-4-carboxamide (10-formyl THF route): step 1/1. Its pathway is purine metabolism; IMP biosynthesis via de novo pathway; IMP from 5-formamido-1-(5-phospho-D-ribosyl)imidazole-4-carboxamide: step 1/1. This chain is Bifunctional purine biosynthesis protein PurH, found in Buchnera aphidicola subsp. Schizaphis graminum (strain Sg).